We begin with the raw amino-acid sequence, 138 residues long: Dual specificity phosphatase ibp1 (138 aa).

Residues 19-133 enclose the Rhodanese domain; that stretch reads SPNEISIIDV…WKRRYGGQQG (115 aa). The active-site Phosphocysteine intermediate is the Cys70.

It belongs to the MPI phosphatase family.

The protein localises to the cytoplasm. It localises to the nucleus. The catalysed reaction is O-phospho-L-tyrosyl-[protein] + H2O = L-tyrosyl-[protein] + phosphate. May play a role in DNA replication checkpoint via regulation of hsk1 or may act downstream of hsk1 in an S phase regulatory pathway. This is Dual specificity phosphatase ibp1 (ibp1) from Schizosaccharomyces pombe (strain 972 / ATCC 24843) (Fission yeast).